The chain runs to 1166 residues: MGMRFILGRSGTNKSEVILKEIKQKISTNPIGPSIFYIVPDQMTFQQEVALFSDSETNGSIRAQIVSFSRLAWRVLQETGGGTKQFISSVGIQMMLRKIIEEKQGDWNAFQKALKKQGFLGQLETMLTELKRYEITPDDLRMQQSHLTDFVHQSPSEQGLTRKLSDLIYIYETFIYALQGTYVDSEDQLQLLIQQIKQSSILNNADIYIDGFHSFTPQEQSVLTELMKTSNSITVALTLDDPWKEDASELDLFYQPSQTYHVLKQLAWEAGVPVEDPIILDTLEGNFQNRPYFAHMEKYFDSRPAPAYEGEVPIEIFEAVHPRAEVEGIAQQVLELIRDNRYRYRDIALLIRQPEVYHDLIETIFNDYELPVFIDEKRPMLHHPLIELIRSILEVVQGNWRNDAIFRVLKTGLIPSADDEFPLTMDSIDQLENYVIEFGIRSRHQWIGENKWKYQRFRGFDSSAQTDRERELQESMNRYRDQVISAIATVDEQLRAATTVKDLCIAMYQWLEELKIPDQLEVTRKYYDDQGLPEKGREQEQVWDAVIQLFDEMVEIAGEEKMDLSVFQVALDAGIETLQFSHVPPSMDHIIVGTIDRSRMSNIRCAFLLGVNEGIWPMKPTSDGMIDEAERLLLEQNGLKLADTSERQLLDDWFYMYLAFTVAKDRLKISYLLSDEEGKAKMPSQLIHRVEELFPATKNHILLQDPEDESNTRRFVSTELKSRSALTAQLAKFKKGYPIDPIWWEVYQWYVEHHPQGGTTHRVLQGLHYENKPESLQKDTVEQLYPKRIQASVSRLETYYRCSYQHFAKYSLNLEERRTYKLDAPDIGQLFHEALKKITEWIHAEGNDFSALTKSQSSHYANRAVTELSPVLQHQILHSSNRYAYIQKKLEEVIARATFVLGEQARLSHFSPVGLELGFGDGNNQIPSLSMLLENGYELVLRGRIDRVDKAELENNLYLRIIDYKSSSKGLDLTEVYYGIALQMLAYLDVVLTHSEKWLGQQADPAGVLYFHVHNPMISAKGSMTEADIEEELFKQYKMQGLLLSNEEIVKMMDSSLETGSSQIVPAALKKNGGFYSYSKIADQSTFETLQNHIHQLLKSAGIDITNGSVDVNPYQHKQQKACTYCPFHSVCQFDPVLEENNYRKFADIKENDLLQLFEREGENNG.

Residues 1–290 (MGMRFILGRS…DTLEGNFQNR (290 aa)) form the UvrD-like helicase ATP-binding domain. Position 8 to 15 (8 to 15 (GRSGTNKS)) interacts with ATP. The region spanning 283 to 588 (LEGNFQNRPY…QFSHVPPSMD (306 aa)) is the UvrD-like helicase C-terminal domain. 4 residues coordinate [4Fe-4S] cluster: C802, C1123, C1126, and C1132.

It belongs to the helicase family. AddB/RexB type 1 subfamily. As to quaternary structure, heterodimer of AddA and AddB. Mg(2+) serves as cofactor. [4Fe-4S] cluster is required as a cofactor.

Functionally, the heterodimer acts as both an ATP-dependent DNA helicase and an ATP-dependent, dual-direction single-stranded exonuclease. Recognizes the chi site generating a DNA molecule suitable for the initiation of homologous recombination. The AddB subunit has 5' -&gt; 3' nuclease activity but not helicase activity. This chain is ATP-dependent helicase/deoxyribonuclease subunit B, found in Oceanobacillus iheyensis (strain DSM 14371 / CIP 107618 / JCM 11309 / KCTC 3954 / HTE831).